Reading from the N-terminus, the 471-residue chain is 6-phosphofructo-2-kinase/fructose-2,6-bisphosphatase 1 (471 aa).

An N-acetylserine modification is found at Ser2. A 6-phosphofructo-2-kinase region spans residues 2-250; that stretch reads SQEMGELTQT…VYYLMNIHVT (249 aa). At Ser33 the chain carries Phosphoserine; by PKA. 49–57 is an ATP binding site; sequence GLPARGKTY. 2 residues coordinate beta-D-fructose 6-phosphate: Arg82 and Arg105. Residue Asp131 is part of the active site. Beta-D-fructose 6-phosphate contacts are provided by Thr133 and Arg139. The residue at position 141 (Ser141) is a Phosphoserine. Cys161 is a catalytic residue. 170-175 contacts ATP; the sequence is NIRQVK. Beta-D-fructose 6-phosphate is bound by residues Lys175, Arg196, and Tyr200. Residues 251–471 form a fructose-2,6-bisphosphatase region; sequence PRSIYLCRHG…EALDTVPAHY (221 aa). Residue Arg258 coordinates beta-D-fructose 2,6-bisphosphate. His259 functions as the Tele-phosphohistidine intermediate in the catalytic mechanism. The beta-D-fructose 2,6-bisphosphate site is built by Asn265, Gly271, and Arg308. Residue Glu328 is the Proton donor/acceptor of the active site. Tyr339, Arg353, Lys357, Tyr368, Gln394, and Arg398 together coordinate beta-D-fructose 2,6-bisphosphate. 350 to 353 lines the ATP pocket; the sequence is FALR. Residues 394–398 and Tyr430 each bind ATP; that span reads QAVMR.

This sequence in the C-terminal section; belongs to the phosphoglycerate mutase family. In terms of assembly, homodimer. As to expression, liver.

It catalyses the reaction beta-D-fructose 2,6-bisphosphate + H2O = beta-D-fructose 6-phosphate + phosphate. The enzyme catalyses beta-D-fructose 6-phosphate + ATP = beta-D-fructose 2,6-bisphosphate + ADP + H(+). Its activity is regulated as follows. Phosphorylation at Ser-33 inhibits the kinase and activates the bisphosphatase. In terms of biological role, synthesis and degradation of fructose 2,6-bisphosphate. This chain is 6-phosphofructo-2-kinase/fructose-2,6-bisphosphatase 1, found in Bos taurus (Bovine).